Consider the following 360-residue polypeptide: Chorismate synthase (360 aa).

Arginine 48 and arginine 54 together coordinate NADP(+). Residues 125-127 (RSS), 242-243 (NG), glycine 283, 298-302 (KPTSS), and arginine 324 each bind FMN.

Belongs to the chorismate synthase family. In terms of assembly, homotetramer. FMNH2 is required as a cofactor.

The enzyme catalyses 5-O-(1-carboxyvinyl)-3-phosphoshikimate = chorismate + phosphate. It functions in the pathway metabolic intermediate biosynthesis; chorismate biosynthesis; chorismate from D-erythrose 4-phosphate and phosphoenolpyruvate: step 7/7. In terms of biological role, catalyzes the anti-1,4-elimination of the C-3 phosphate and the C-6 proR hydrogen from 5-enolpyruvylshikimate-3-phosphate (EPSP) to yield chorismate, which is the branch point compound that serves as the starting substrate for the three terminal pathways of aromatic amino acid biosynthesis. This reaction introduces a second double bond into the aromatic ring system. The protein is Chorismate synthase of Gluconobacter oxydans (strain 621H) (Gluconobacter suboxydans).